Here is a 506-residue protein sequence, read N- to C-terminus: Maturase K (506 aa).

Belongs to the intron maturase 2 family. MatK subfamily.

Its subcellular location is the plastid. The protein resides in the chloroplast. Its function is as follows. Usually encoded in the trnK tRNA gene intron. Probably assists in splicing its own and other chloroplast group II introns. The polypeptide is Maturase K (Trifolium wormskioldii (Cows clover)).